The sequence spans 432 residues: Trigger factor (432 aa).

A PPIase FKBP-type domain is found at 161–246; it reads GKRVSIDFVG…VNKVEARQLP (86 aa).

It belongs to the FKBP-type PPIase family. Tig subfamily.

It localises to the cytoplasm. It carries out the reaction [protein]-peptidylproline (omega=180) = [protein]-peptidylproline (omega=0). Involved in protein export. Acts as a chaperone by maintaining the newly synthesized protein in an open conformation. Functions as a peptidyl-prolyl cis-trans isomerase. This chain is Trigger factor, found in Vibrio vulnificus (strain YJ016).